The sequence spans 298 residues: Lipoyl synthase 1 (298 aa).

Cysteine 34, cysteine 39, cysteine 45, cysteine 60, cysteine 64, cysteine 67, and serine 274 together coordinate [4Fe-4S] cluster. The Radical SAM core domain occupies phenylalanine 46 to leucine 263.

It belongs to the radical SAM superfamily. Lipoyl synthase family. The cofactor is [4Fe-4S] cluster.

It is found in the cytoplasm. It catalyses the reaction [[Fe-S] cluster scaffold protein carrying a second [4Fe-4S](2+) cluster] + N(6)-octanoyl-L-lysyl-[protein] + 2 oxidized [2Fe-2S]-[ferredoxin] + 2 S-adenosyl-L-methionine + 4 H(+) = [[Fe-S] cluster scaffold protein] + N(6)-[(R)-dihydrolipoyl]-L-lysyl-[protein] + 4 Fe(3+) + 2 hydrogen sulfide + 2 5'-deoxyadenosine + 2 L-methionine + 2 reduced [2Fe-2S]-[ferredoxin]. Its pathway is protein modification; protein lipoylation via endogenous pathway; protein N(6)-(lipoyl)lysine from octanoyl-[acyl-carrier-protein]: step 2/2. In terms of biological role, catalyzes the radical-mediated insertion of two sulfur atoms into the C-6 and C-8 positions of the octanoyl moiety bound to the lipoyl domains of lipoate-dependent enzymes, thereby converting the octanoylated domains into lipoylated derivatives. The chain is Lipoyl synthase 1 from Thermosynechococcus vestitus (strain NIES-2133 / IAM M-273 / BP-1).